Consider the following 171-residue polypeptide: uncharacterized protein (171 aa).

It to M.jannaschii MJ0417.

This is an uncharacterized protein from Methanocaldococcus jannaschii (strain ATCC 43067 / DSM 2661 / JAL-1 / JCM 10045 / NBRC 100440) (Methanococcus jannaschii).